The sequence spans 542 residues: ABC transport system permease protein p69 (542 aa).

12 consecutive transmembrane segments (helical) span residues 23–43, 77–97, 114–134, 140–160, 212–232, 236–256, 287–307, 350–370, 386–406, 412–432, 481–501, and 509–529; these read ALAIIVLVVIIYSFIDNFSGF, IFYVVSGSILGFVIALWFSYL, FTIFLRSFPVLVFAFLFNNLF, ATLTITWFSWLWSTKYITAFF, LSIAGITGIGELIATPLGGTV, LVLIPMLTLIGFLLFLEASVF, VMIYILALVLAAFTLANLVQL, TQAISLITLVFVLALLFGFLA, LLVIRVIPSVLLFRLFDPIIF, IIFVLAIHSAASYGQLITINF, LVVFGIFGGSIIGGRINNFFE, and GTITLPLMVYLMVFEVILMAV. Residues 349–526 form the ABC transmembrane type-1 domain; it reads TTQAISLITL…VYLMVFEVIL (178 aa).

Belongs to the binding-protein-dependent transport system permease family.

Its subcellular location is the cell membrane. Probably part of a high-affinity transport system. This is ABC transport system permease protein p69 (p69) from Mycoplasma pneumoniae (strain ATCC 29342 / M129 / Subtype 1) (Mycoplasmoides pneumoniae).